The following is a 314-amino-acid chain: Cathepsin L 2 (314 aa).

The first 24 residues, 1–24, serve as a signal peptide directing secretion; that stretch reads MMLLGASLYLNNTQEVSDEIDTAN. The propeptide at 25–109 is activation peptide; that stretch reads LYANWKMKYN…NASNANFQYK (85 aa). 3 disulfides stabilise this stretch: Cys132-Cys175, Cys166-Cys207, and Cys259-Cys302. Cys135 is a catalytic residue. Active-site residues include His265 and Asn282.

It belongs to the peptidase C1 family.

The protein resides in the secreted. It carries out the reaction Specificity close to that of papain. As compared to cathepsin B, cathepsin L exhibits higher activity toward protein substrates, but has little activity on Z-Arg-Arg-NHMec, and no peptidyl-dipeptidase activity.. May be involved in extracellular digestion. The chain is Cathepsin L 2 from Paramecium tetraurelia.